The following is a 469-amino-acid chain: Ribulose bisphosphate carboxylase large chain (469 aa).

Lys-8 bears the N6,N6,N6-trimethyllysine mark. Substrate-binding residues include Asn-117 and Thr-167. The active-site Proton acceptor is the Lys-169. Lys-171 contributes to the substrate binding site. Positions 195, 197, and 198 each coordinate Mg(2+). Lys-195 bears the N6-carboxylysine mark. Catalysis depends on His-288, which acts as the Proton acceptor. Residues Arg-289, His-321, and Ser-373 each contribute to the substrate site.

It belongs to the RuBisCO large chain family. Type I subfamily. As to quaternary structure, heterohexadecamer of 8 large chains and 8 small chains; disulfide-linked. The disulfide link is formed within the large subunit homodimers. It depends on Mg(2+) as a cofactor. In terms of processing, the disulfide bond which can form in the large chain dimeric partners within the hexadecamer appears to be associated with oxidative stress and protein turnover.

It is found in the plastid. It localises to the chloroplast. The catalysed reaction is 2 (2R)-3-phosphoglycerate + 2 H(+) = D-ribulose 1,5-bisphosphate + CO2 + H2O. It carries out the reaction D-ribulose 1,5-bisphosphate + O2 = 2-phosphoglycolate + (2R)-3-phosphoglycerate + 2 H(+). Functionally, ruBisCO catalyzes two reactions: the carboxylation of D-ribulose 1,5-bisphosphate, the primary event in carbon dioxide fixation, as well as the oxidative fragmentation of the pentose substrate in the photorespiration process. Both reactions occur simultaneously and in competition at the same active site. In Coleonema pulchellum (Confetti bush), this protein is Ribulose bisphosphate carboxylase large chain.